The chain runs to 259 residues: Small ribosomal subunit protein uS2 (259 aa).

The disordered stretch occupies residues 234–259 (VAEDSEEVSTVDADAITAEDFETEEV). The segment covering 250–259 (TAEDFETEEV) has biased composition (acidic residues).

The protein belongs to the universal ribosomal protein uS2 family.

The sequence is that of Small ribosomal subunit protein uS2 from Sulfurimonas denitrificans (strain ATCC 33889 / DSM 1251) (Thiomicrospira denitrificans (strain ATCC 33889 / DSM 1251)).